A 79-amino-acid chain; its full sequence is Putative defensin-like protein 274 (79 aa).

Residues 1–23 (MASSRFQLVALLVVFSLVISITA) form the signal peptide. 4 disulfide bridges follow: Cys-35/Cys-76, Cys-41/Cys-64, Cys-47/Cys-74, and Cys-51/Cys-75.

It belongs to the DEFL family.

The protein resides in the secreted. This is Putative defensin-like protein 274 from Arabidopsis thaliana (Mouse-ear cress).